Here is a 238-residue protein sequence, read N- to C-terminus: CBS domain-containing protein CBSX2, chloroplastic (238 aa).

Residues 1-71 (MGSISLSNSM…ASVNNNNSVP (71 aa)) constitute a chloroplast transit peptide. CBS domains are found at residues 83 to 145 (MTPR…QNDT) and 177 to 234 (MTPS…KRET).

The protein localises to the plastid. It localises to the chloroplast stroma. The protein is CBS domain-containing protein CBSX2, chloroplastic (CBSX2) of Arabidopsis thaliana (Mouse-ear cress).